The primary structure comprises 367 residues: Peroxidase 1 (367 aa).

Positions 1 to 33 (MAKESKLTAGVAAALTVVAACALCLLLPATARA) are cleaved as a signal peptide. Position 34 is a pyrrolidone carboxylic acid (glutamine 34). Disulfide bonds link cysteine 44/cysteine 125, cysteine 77/cysteine 82, cysteine 131/cysteine 335, and cysteine 209/cysteine 244. The active-site Proton acceptor is histidine 75. Residues aspartate 76, valine 79, glycine 81, aspartate 83, and serine 85 each contribute to the Ca(2+) site. Asparagine 164 carries N-linked (GlcNAc...) asparagine glycosylation. Residue proline 172 participates in substrate binding. Histidine 202 provides a ligand contact to heme b. Threonine 203 is a binding site for Ca(2+). 2 N-linked (GlcNAc...) asparagine glycosylation sites follow: asparagine 218 and asparagine 247. Aspartate 259, threonine 262, and aspartate 267 together coordinate Ca(2+). The N-linked (GlcNAc...) asparagine glycan is linked to asparagine 303.

The protein belongs to the peroxidase family. Classical plant (class III) peroxidase subfamily. Heme b serves as cofactor. It depends on Ca(2+) as a cofactor. As to expression, expressed in the root tip meristems.

The protein resides in the secreted. The protein localises to the vacuole. It carries out the reaction 2 a phenolic donor + H2O2 = 2 a phenolic radical donor + 2 H2O. Its function is as follows. Removal of H(2)O(2), oxidation of toxic reductants, biosynthesis and degradation of lignin, suberization, auxin catabolism, response to environmental stresses such as wounding, pathogen attack and oxidative stress. These functions might be dependent on each isozyme/isoform in each plant tissue. This Zea mays (Maize) protein is Peroxidase 1 (PER1).